A 396-amino-acid chain; its full sequence is Endo-1,4-beta-xylanase A (396 aa).

The signal sequence occupies residues 1–28 (MITLFRKPFVAGLAISLLVGGGIGNVAA). The GH10 domain maps to 51-396 (AWQVASLSER…VKPAYWRIID (346 aa)). The Proton donor role is filled by Glu-195. Glu-301 functions as the Nucleophile in the catalytic mechanism.

Belongs to the glycosyl hydrolase 10 (cellulase F) family.

The protein resides in the secreted. It catalyses the reaction Endohydrolysis of (1-&gt;4)-beta-D-xylosidic linkages in xylans.. Its pathway is glycan degradation; xylan degradation. This is Endo-1,4-beta-xylanase A (xynA) from Halalkalibacterium halodurans (strain ATCC BAA-125 / DSM 18197 / FERM 7344 / JCM 9153 / C-125) (Bacillus halodurans).